Here is an 837-residue protein sequence, read N- to C-terminus: Phenylalanine--tRNA ligase beta subunit (837 aa).

A tRNA-binding domain is found at 39–149 (SASLEGIVTG…EMNIAIPKIG (111 aa)). Residues 415–520 (IEEQLLLLRR…RLIGYDRFDS (106 aa)) enclose the B5 domain. Residues D498, D504, E507, and E508 each contribute to the Mg(2+) site. Positions 743–836 (PTVPSMERDI…LKVEFSAELR (94 aa)) constitute an FDX-ACB domain.

It belongs to the phenylalanyl-tRNA synthetase beta subunit family. Type 1 subfamily. As to quaternary structure, tetramer of two alpha and two beta subunits. The cofactor is Mg(2+).

It is found in the cytoplasm. It carries out the reaction tRNA(Phe) + L-phenylalanine + ATP = L-phenylalanyl-tRNA(Phe) + AMP + diphosphate + H(+). This chain is Phenylalanine--tRNA ligase beta subunit, found in Prochlorococcus marinus (strain SARG / CCMP1375 / SS120).